Reading from the N-terminus, the 359-residue chain is Peptide chain release factor 1 (359 aa).

The residue at position 235 (Gln-235) is an N5-methylglutamine.

The protein belongs to the prokaryotic/mitochondrial release factor family. Methylated by PrmC. Methylation increases the termination efficiency of RF1.

The protein resides in the cytoplasm. Its function is as follows. Peptide chain release factor 1 directs the termination of translation in response to the peptide chain termination codons UAG and UAA. The sequence is that of Peptide chain release factor 1 from Nitrosomonas europaea (strain ATCC 19718 / CIP 103999 / KCTC 2705 / NBRC 14298).